The sequence spans 227 residues: Orotate phosphoribosyltransferase (227 aa).

Lys-26 is a binding site for 5-phospho-alpha-D-ribose 1-diphosphate. Orotate is bound at residue 34-35 (FF). Residues 72 to 73 (YK), Arg-98, Lys-99, Lys-102, His-104, and 123 to 131 (DDVVSAGLS) each bind 5-phospho-alpha-D-ribose 1-diphosphate. Positions 127 and 155 each coordinate orotate.

The protein belongs to the purine/pyrimidine phosphoribosyltransferase family. PyrE subfamily. In terms of assembly, homodimer. It depends on Mg(2+) as a cofactor.

The enzyme catalyses orotidine 5'-phosphate + diphosphate = orotate + 5-phospho-alpha-D-ribose 1-diphosphate. Its pathway is pyrimidine metabolism; UMP biosynthesis via de novo pathway; UMP from orotate: step 1/2. In terms of biological role, catalyzes the transfer of a ribosyl phosphate group from 5-phosphoribose 1-diphosphate to orotate, leading to the formation of orotidine monophosphate (OMP). This is Orotate phosphoribosyltransferase from Nitrosomonas europaea (strain ATCC 19718 / CIP 103999 / KCTC 2705 / NBRC 14298).